The sequence spans 159 residues: MKAVADTLGVSRSNLIERLKGRSKPRGPYNKAEDAELLPAIRRLVDQRPTYGYRRIAASSIAKGEPPISLSSTPNGSIASWVTTPCYWRSTQPFARAASTMARSWSCAPTCAGARTAWSSPAGMARSFVSPSSSTPSTARSSPGRPLPMQAFPAQTCAT.

Low complexity predominate over residues 126–142 (RSFVSPSSSTPSTARSS). A disordered region spans residues 126–159 (RSFVSPSSSTPSTARSSPGRPLPMQAFPAQTCAT).

This is Insertion element IS136 uncharacterized 16.9 kDa protein from Agrobacterium tumefaciens (strain T37).